A 232-amino-acid chain; its full sequence is MKIGIIGAMEEEVTLLRDKIENRQTISLGGCEIYTGQLNGTEVALLKSGIGKVAAALGATLLLEHCKPDVIINTGSAGGLAPTLKVGDIVVSDEARYHDADVTAFGYEYGQLPGCPAGFKADDKLIAAAEACIAELNLNAVRGLIVSGDAFINGSVGLAKIRHNFPQAIAVEMEATAIAHVCHNFNVPFVVVRAISDVADQQSHLSFDEFLAVAAKQSSLMVESLVQKLAHG.

The Proton acceptor role is filled by E12. Substrate-binding positions include G78, I152, and 173–174 (ME). Residue D197 is the Proton donor of the active site.

It belongs to the PNP/UDP phosphorylase family. MtnN subfamily. In terms of assembly, homodimer.

The enzyme catalyses S-adenosyl-L-homocysteine + H2O = S-(5-deoxy-D-ribos-5-yl)-L-homocysteine + adenine. It carries out the reaction S-methyl-5'-thioadenosine + H2O = 5-(methylsulfanyl)-D-ribose + adenine. It catalyses the reaction 5'-deoxyadenosine + H2O = 5-deoxy-D-ribose + adenine. It functions in the pathway amino-acid biosynthesis; L-methionine biosynthesis via salvage pathway; S-methyl-5-thio-alpha-D-ribose 1-phosphate from S-methyl-5'-thioadenosine (hydrolase route): step 1/2. Catalyzes the irreversible cleavage of the glycosidic bond in both 5'-methylthioadenosine (MTA) and S-adenosylhomocysteine (SAH/AdoHcy) to adenine and the corresponding thioribose, 5'-methylthioribose and S-ribosylhomocysteine, respectively. Also cleaves 5'-deoxyadenosine, a toxic by-product of radical S-adenosylmethionine (SAM) enzymes, into 5-deoxyribose and adenine. Thus, is required for in vivo function of the radical SAM enzymes biotin synthase and lipoic acid synthase, that are inhibited by 5'-deoxyadenosine accumulation. This chain is 5'-methylthioadenosine/S-adenosylhomocysteine nucleosidase, found in Escherichia coli O7:K1 (strain IAI39 / ExPEC).